Reading from the N-terminus, the 190-residue chain is Translation initiation factor IF-3 (190 aa).

This sequence belongs to the IF-3 family. As to quaternary structure, monomer.

It is found in the cytoplasm. Functionally, IF-3 binds to the 30S ribosomal subunit and shifts the equilibrium between 70S ribosomes and their 50S and 30S subunits in favor of the free subunits, thus enhancing the availability of 30S subunits on which protein synthesis initiation begins. This Prochlorococcus marinus (strain MIT 9301) protein is Translation initiation factor IF-3.